We begin with the raw amino-acid sequence, 275 residues long: MQAVQQEIAQALKVQPPFADAAALEAEVARRVTFIKGCLANARLKTLVLGISGGVDSLTAALLAQRAINELRAETGDKAYTFIAVRLPYQVQHDEHDAQACLDVIKADEVHTVDIAPAVRALAAEVVELKNGSPTLVDFVVGNVKARTRMVAQYTIAGARAGLVIGTDHAAEAVMGFFTKFGDGACDLAPLSGLVKNQVRAIARSFGAPESLVEKVPTADLEDLEPGKPDEASHGVTYQQIDAFLHGQPVDQAAFDIIVATYRKTQHKRELPFAP.

50–57 (GISGGVDS) provides a ligand contact to ATP. A Mg(2+)-binding site is contributed by Asp-56. Arg-147 serves as a coordination point for deamido-NAD(+). Residue Thr-167 participates in ATP binding. Glu-172 provides a ligand contact to Mg(2+). Deamido-NAD(+) is bound by residues Lys-180 and Asp-187. Lys-196 and Thr-218 together coordinate ATP. 267-268 (HK) provides a ligand contact to deamido-NAD(+).

Belongs to the NAD synthetase family. As to quaternary structure, homodimer.

It catalyses the reaction deamido-NAD(+) + NH4(+) + ATP = AMP + diphosphate + NAD(+) + H(+). It participates in cofactor biosynthesis; NAD(+) biosynthesis; NAD(+) from deamido-NAD(+) (ammonia route): step 1/1. Its function is as follows. Catalyzes the ATP-dependent amidation of deamido-NAD to form NAD. Uses ammonia as a nitrogen source. This chain is NH(3)-dependent NAD(+) synthetase, found in Pseudomonas putida (strain GB-1).